The primary structure comprises 199 residues: V-set and transmembrane domain-containing protein 5 (199 aa).

An N-terminal signal peptide occupies residues 1–27; it reads MRPPRCVGRTQGIPLGLLAFWVATARC. At 28-146 the chain is on the extracellular side; it reads LQSQGVSLYI…VSEIRYEDLH (119 aa). In terms of domain architecture, Ig-like C2-type spans 36–138; the sequence is YIPRSAINAT…QSGTILLHVS (103 aa). Asparagine 43, asparagine 87, and asparagine 101 each carry an N-linked (GlcNAc...) asparagine glycan. The chain crosses the membrane as a helical span at residues 147–167; the sequence is FVAVFFALLAAVAVVLISLMW. Over 168-199 the chain is Cytoplasmic; sequence VCNQCAYKFQRKRRYKLRESTTEEIEMKDVEC. The segment at 169-185 is important for CDC42-dependent filopodia induction; the sequence is CNQCAYKFQRKRRYKLR.

As to quaternary structure, can homooligomerize through cis interactions within the same cell membrane. Post-translationally, N-glycosylated.

The protein resides in the cell membrane. It localises to the cell projection. The protein localises to the dendrite. It is found in the axon. Functionally, cell adhesion-like membrane protein of the central nervous system (CNS) which modulates both the position and complexity of central neurons by altering their membrane morphology and dynamics. Involved in the formation of neuronal dendrites and protrusions including dendritic filopodia. In synaptogenesis, regulates synapse formation by altering dendritic spine morphology and actin distribution. Promotes formation of unstable neuronal spines such as thin and branched types. Regulates neuronal morphogenesis and migration during cortical development in the brain. In Rattus norvegicus (Rat), this protein is V-set and transmembrane domain-containing protein 5 (Vstm5).